A 429-amino-acid chain; its full sequence is Enolase (429 aa).

Q162 serves as a coordination point for (2R)-2-phosphoglycerate. E204 serves as the catalytic Proton donor. 3 residues coordinate Mg(2+): D241, E283, and D310. 4 residues coordinate (2R)-2-phosphoglycerate: K335, R364, S365, and K386. K335 acts as the Proton acceptor in catalysis.

The protein belongs to the enolase family. Requires Mg(2+) as cofactor.

Its subcellular location is the cytoplasm. The protein resides in the secreted. It is found in the cell surface. It carries out the reaction (2R)-2-phosphoglycerate = phosphoenolpyruvate + H2O. It functions in the pathway carbohydrate degradation; glycolysis; pyruvate from D-glyceraldehyde 3-phosphate: step 4/5. Its function is as follows. Catalyzes the reversible conversion of 2-phosphoglycerate (2-PG) into phosphoenolpyruvate (PEP). It is essential for the degradation of carbohydrates via glycolysis. This is Enolase from Mycolicibacterium vanbaalenii (strain DSM 7251 / JCM 13017 / BCRC 16820 / KCTC 9966 / NRRL B-24157 / PYR-1) (Mycobacterium vanbaalenii).